Here is a 101-residue protein sequence, read N- to C-terminus: Integration host factor subunit beta (101 aa).

Belongs to the bacterial histone-like protein family. As to quaternary structure, heterodimer of an alpha and a beta chain.

Functionally, this protein is one of the two subunits of integration host factor, a specific DNA-binding protein that functions in genetic recombination as well as in transcriptional and translational control. The chain is Integration host factor subunit beta from Nitrobacter hamburgensis (strain DSM 10229 / NCIMB 13809 / X14).